We begin with the raw amino-acid sequence, 138 residues long: Large ribosomal subunit protein uL16 (138 aa).

Residues 1 to 13 are compositionally biased toward basic residues; that stretch reads MLQPSRRKYRKEQ. The disordered stretch occupies residues 1-24; sequence MLQPSRRKYRKEQKGRNTGLASRG.

The protein belongs to the universal ribosomal protein uL16 family. As to quaternary structure, part of the 50S ribosomal subunit.

In terms of biological role, binds 23S rRNA and is also seen to make contacts with the A and possibly P site tRNAs. This chain is Large ribosomal subunit protein uL16, found in Bordetella bronchiseptica (strain ATCC BAA-588 / NCTC 13252 / RB50) (Alcaligenes bronchisepticus).